Reading from the N-terminus, the 180-residue chain is tRNA (cytidine(56)-2'-O)-methyltransferase (180 aa).

S-adenosyl-L-methionine-binding positions include L83, 115 to 119, and 133 to 140; these read GAEKV and VGNQPHSE.

The protein belongs to the aTrm56 family. In terms of assembly, homodimer.

It localises to the cytoplasm. It carries out the reaction cytidine(56) in tRNA + S-adenosyl-L-methionine = 2'-O-methylcytidine(56) in tRNA + S-adenosyl-L-homocysteine + H(+). Specifically catalyzes the AdoMet-dependent 2'-O-ribose methylation of cytidine at position 56 in tRNAs. In Methanococcus aeolicus (strain ATCC BAA-1280 / DSM 17508 / OCM 812 / Nankai-3), this protein is tRNA (cytidine(56)-2'-O)-methyltransferase.